The sequence spans 70 residues: Alpha-toxin Bot9 (70 aa).

One can recognise an LCN-type CS-alpha/beta domain in the interval Arg6 to Tyr69. 4 disulfides stabilise this stretch: Cys16-Cys68, Cys20-Cys40, Cys26-Cys50, and Cys30-Cys52.

This sequence belongs to the long (4 C-C) scorpion toxin superfamily. Sodium channel inhibitor family. Alpha subfamily. In terms of tissue distribution, expressed by the venom gland.

It is found in the secreted. In terms of biological role, alpha toxins bind voltage-independently at site-3 of sodium channels (Nav) and inhibit the inactivation of the activated channels, thereby blocking neuronal transmission. This toxin is active against rat Nav1.2/SCN2A and B.germanica Nav1. This is Alpha-toxin Bot9 from Buthus occitanus tunetanus (Common European scorpion).